A 454-amino-acid chain; its full sequence is Membrane-bound lytic murein transglycosylase F (454 aa).

An N-terminal signal peptide occupies residues 1–24 (MRRPLRRVTVVLLWVALAIGVAWF). The segment at 25–265 (YDYRRSMQSL…IYNRYYTAVD (241 aa)) is non-LT domain. Residues 266–454 (TFDYVDVKKF…YDILKQKKAV (189 aa)) are LT domain. Glu311 is an active-site residue.

In the N-terminal section; belongs to the bacterial solute-binding protein 3 family. It in the C-terminal section; belongs to the transglycosylase Slt family.

The protein resides in the cell outer membrane. The catalysed reaction is Exolytic cleavage of the (1-&gt;4)-beta-glycosidic linkage between N-acetylmuramic acid (MurNAc) and N-acetylglucosamine (GlcNAc) residues in peptidoglycan, from either the reducing or the non-reducing ends of the peptidoglycan chains, with concomitant formation of a 1,6-anhydrobond in the MurNAc residue.. In terms of biological role, murein-degrading enzyme that degrades murein glycan strands and insoluble, high-molecular weight murein sacculi, with the concomitant formation of a 1,6-anhydromuramoyl product. Lytic transglycosylases (LTs) play an integral role in the metabolism of the peptidoglycan (PG) sacculus. Their lytic action creates space within the PG sacculus to allow for its expansion as well as for the insertion of various structures such as secretion systems and flagella. This is Membrane-bound lytic murein transglycosylase F from Desulfosudis oleivorans (strain DSM 6200 / JCM 39069 / Hxd3) (Desulfococcus oleovorans).